The primary structure comprises 95 residues: Large ribosomal subunit protein uL23c (95 aa).

It belongs to the universal ribosomal protein uL23 family. As to quaternary structure, part of the 50S ribosomal subunit.

The protein localises to the plastid. It is found in the chloroplast. Its function is as follows. Binds to 23S rRNA. The chain is Large ribosomal subunit protein uL23c (rpl23) from Chlamydomonas reinhardtii (Chlamydomonas smithii).